The following is a 91-amino-acid chain: Chorion class B protein M3A5 (91 aa).

The central domain stretch occupies residues 1–51; that stretch reads VASENRYEGTVGVSGNLPFLGTADVAGEFPTAGIGEILYGCGNGAVGITRE. A right arm (Gly-rich tandem repeats) region spans residues 52–91; it reads GGLGYGAGYGGGYGLGYGGYGGGYGLGYGGYGGCGCGCGY.

Belongs to the chorion protein family.

Its function is as follows. This protein is one of many from the eggshell of the silk moth. The polypeptide is Chorion class B protein M3A5 (Bombyx mori (Silk moth)).